The chain runs to 154 residues: Ribonuclease H (154 aa).

One can recognise an RNase H type-1 domain in the interval lysine 7 to alanine 148. Residues aspartate 16, glutamate 54, aspartate 76, and aspartate 140 each coordinate Mg(2+).

The protein belongs to the RNase H family. As to quaternary structure, monomer. Requires Mg(2+) as cofactor.

It is found in the cytoplasm. It catalyses the reaction Endonucleolytic cleavage to 5'-phosphomonoester.. Its function is as follows. Endonuclease that specifically degrades the RNA of RNA-DNA hybrids. The chain is Ribonuclease H from Paramagnetospirillum magneticum (strain ATCC 700264 / AMB-1) (Magnetospirillum magneticum).